A 166-amino-acid polypeptide reads, in one-letter code: UBA-like domain-containing protein 2-A (166 aa).

A disordered region spans residues 120–166 (QQPVWLPPASPTTHLHHHHHHPQPVWPPNSQPTGGPQKAMAAMDGQR).

The protein belongs to the UBALD family.

This Xenopus laevis (African clawed frog) protein is UBA-like domain-containing protein 2-A (ubald2-a).